Here is an 82-residue protein sequence, read N- to C-terminus: Exodeoxyribonuclease 7 small subunit (82 aa).

This sequence belongs to the XseB family. Heterooligomer composed of large and small subunits.

Its subcellular location is the cytoplasm. It carries out the reaction Exonucleolytic cleavage in either 5'- to 3'- or 3'- to 5'-direction to yield nucleoside 5'-phosphates.. Its function is as follows. Bidirectionally degrades single-stranded DNA into large acid-insoluble oligonucleotides, which are then degraded further into small acid-soluble oligonucleotides. The protein is Exodeoxyribonuclease 7 small subunit of Mannheimia succiniciproducens (strain KCTC 0769BP / MBEL55E).